Reading from the N-terminus, the 475-residue chain is UDP-N-acetylmuramate--L-alanine ligase (475 aa).

125-131 (GTHGKTT) contacts ATP.

The protein belongs to the MurCDEF family.

The protein localises to the cytoplasm. It catalyses the reaction UDP-N-acetyl-alpha-D-muramate + L-alanine + ATP = UDP-N-acetyl-alpha-D-muramoyl-L-alanine + ADP + phosphate + H(+). It functions in the pathway cell wall biogenesis; peptidoglycan biosynthesis. Its function is as follows. Cell wall formation. The protein is UDP-N-acetylmuramate--L-alanine ligase of Actinobacillus pleuropneumoniae serotype 5b (strain L20).